Here is a 277-residue protein sequence, read N- to C-terminus: Large ribosomal subunit protein uL2 (277 aa).

The tract at residues 215-263 (LGRKPHQRGSAMNPVDHPHGGGEGRTGAGRVPVSPWGQPAKGLKTRKKR) is disordered.

The protein belongs to the universal ribosomal protein uL2 family. Part of the 50S ribosomal subunit. Forms a bridge to the 30S subunit in the 70S ribosome.

One of the primary rRNA binding proteins. Required for association of the 30S and 50S subunits to form the 70S ribosome, for tRNA binding and peptide bond formation. It has been suggested to have peptidyltransferase activity; this is somewhat controversial. Makes several contacts with the 16S rRNA in the 70S ribosome. The sequence is that of Large ribosomal subunit protein uL2 from Deinococcus geothermalis (strain DSM 11300 / CIP 105573 / AG-3a).